Consider the following 275-residue polypeptide: Voltage-dependent calcium channel gamma-5 subunit (275 aa).

4 helical membrane passes run A8 to V28, F103 to I123, I129 to L149, and G176 to S196.

It belongs to the PMP-22/EMP/MP20 family. CACNG subfamily. In terms of assembly, the L-type calcium channel is composed of five subunits: alpha-1, alpha-2/delta, beta and gamma. Acts as an auxiliary subunit for AMPA-selective glutamate receptors (AMPARs). Found in a complex with GRIA1, GRIA2, GRIA3, GRIA4, CNIH2, CNIH3, CACNG2, CACNG3, CACNG4, CACNG7 and CACNG8. Interacts with GRIA1, GRIA2, GRIA3 and GRIA4.

The protein resides in the membrane. It is found in the postsynaptic density membrane. In terms of biological role, regulates the gating properties of AMPA-selective glutamate receptors (AMPARs). Modulates their gating properties by accelerating their rates of activation, deactivation and desensitization. Displays subunit-specific AMPA receptor regulation. Shows specificity for GRIA1, GRIA4 and the long isoform of GRIA2. Thought to stabilize the calcium channel in an inactivated (closed) state. This is Voltage-dependent calcium channel gamma-5 subunit (CACNG5) from Homo sapiens (Human).